We begin with the raw amino-acid sequence, 222 residues long: Protein-L-isoaspartate O-methyltransferase (222 aa).

Serine 69 is a catalytic residue.

It belongs to the methyltransferase superfamily. L-isoaspartyl/D-aspartyl protein methyltransferase family.

The protein resides in the cytoplasm. It carries out the reaction [protein]-L-isoaspartate + S-adenosyl-L-methionine = [protein]-L-isoaspartate alpha-methyl ester + S-adenosyl-L-homocysteine. Catalyzes the methyl esterification of L-isoaspartyl residues in peptides and proteins that result from spontaneous decomposition of normal L-aspartyl and L-asparaginyl residues. It plays a role in the repair and/or degradation of damaged proteins. The protein is Protein-L-isoaspartate O-methyltransferase of Nitrosomonas europaea (strain ATCC 19718 / CIP 103999 / KCTC 2705 / NBRC 14298).